Reading from the N-terminus, the 414-residue chain is L-cysteine:1D-myo-inositol 2-amino-2-deoxy-alpha-D-glucopyranoside ligase (414 aa).

Cysteine 43 is a Zn(2+) binding site. Residues cysteine 43–threonine 46, threonine 58, and asparagine 81–threonine 83 each bind L-cysteinyl-5'-AMP. The 'HIGH' region motif lies at isoleucine 45 to histidine 55. Residues glutamate 187–proline 192 carry the 'ERGGDP' region motif. Tryptophan 227 lines the L-cysteinyl-5'-AMP pocket. Residue cysteine 231 participates in Zn(2+) binding. Residue glycine 249 to aspartate 251 coordinates L-cysteinyl-5'-AMP. Histidine 256 is a Zn(2+) binding site. Isoleucine 283 contacts L-cysteinyl-5'-AMP. The 'KMSKS' region signature appears at lysine 289–serine 293.

The protein belongs to the class-I aminoacyl-tRNA synthetase family. MshC subfamily. As to quaternary structure, monomer. Requires Zn(2+) as cofactor.

It catalyses the reaction 1D-myo-inositol 2-amino-2-deoxy-alpha-D-glucopyranoside + L-cysteine + ATP = 1D-myo-inositol 2-(L-cysteinylamino)-2-deoxy-alpha-D-glucopyranoside + AMP + diphosphate + H(+). Functionally, catalyzes the ATP-dependent condensation of GlcN-Ins and L-cysteine to form L-Cys-GlcN-Ins. In Tsukamurella paurometabola (strain ATCC 8368 / DSM 20162 / CCUG 35730 / CIP 100753 / JCM 10117 / KCTC 9821 / NBRC 16120 / NCIMB 702349 / NCTC 13040) (Corynebacterium paurometabolum), this protein is L-cysteine:1D-myo-inositol 2-amino-2-deoxy-alpha-D-glucopyranoside ligase.